We begin with the raw amino-acid sequence, 386 residues long: Heat-inducible transcription repressor HrcA (386 aa).

This sequence belongs to the HrcA family.

Negative regulator of class I heat shock genes (grpE-dnaK-dnaJ and groELS operons). Prevents heat-shock induction of these operons. In Chlamydia felis (strain Fe/C-56) (Chlamydophila felis), this protein is Heat-inducible transcription repressor HrcA.